Reading from the N-terminus, the 397-residue chain is Ethanolaminephosphotransferase 1 (397 aa).

Ala2 bears the N-acetylalanine mark. 10 consecutive transmembrane segments (helical) span residues 47-69, 84-103, 123-145, 150-172, 179-201, 221-243, 256-278, 291-310, 317-339, and 344-366; these read WLAPNLITFSGFLLVVFNFLLMA, HVPDWVWIVVGILNFVAYTL, LFDHGLDNWSYVYFVVTVYSIFG, GVSVFVLYLLLWVVLFSFILSHW, ILFLPWGYDISQVTISFVYIVTA, LFTAMIIGCALCVTLPMSLLNFF, VYEAMVPLFSPCLLFILSTAWIL, VFYFMVGTAFANSTCQLIVC, CPTLNWLLVPLFLVVLVVNLGVA, and SILLYTLTTAFTLAHIHYGVRVV. A non-standard amino acid (selenocysteine) is located at residue Sec387.

The protein belongs to the CDP-alcohol phosphatidyltransferase class-I family. Mg(2+) serves as cofactor. It depends on Mn(2+) as a cofactor.

Its subcellular location is the endoplasmic reticulum membrane. The enzyme catalyses CDP-ethanolamine + a 1,2-diacyl-sn-glycerol = a 1,2-diacyl-sn-glycero-3-phosphoethanolamine + CMP + H(+). The catalysed reaction is 1-O-alkyl-2-acyl-sn-glycerol + CDP-ethanolamine = a 1-O-alkyl-2-acyl-sn-glycero-3-phosphoethanolamine + CMP + H(+). The protein operates within phospholipid metabolism; phosphatidylethanolamine biosynthesis; phosphatidylethanolamine from ethanolamine: step 3/3. In terms of biological role, ethanolaminephosphotransferase that catalyzes the transfer of phosphoethanolamine (PE) from CDP-ethanolamine to lipid acceptors, the final step in the synthesis of PE via the 'Kennedy' pathway. PE is the second most abundant phospholipid of membranes in mammals and is involved in various membrane-related cellular processes. The enzyme is critical for the synthesis of several PE species and also catalyzes the synthesis of plasmanyl-PE, a lipid required for proper myelination and neurodevelopment, from 1-alkyl-2-acylglycerol. This Pongo abelii (Sumatran orangutan) protein is Ethanolaminephosphotransferase 1.